The following is a 410-amino-acid chain: Lissencephaly-1 homolog (410 aa).

Residues 7–39 (QRDELNRAIADYLRSNGYEEAYSVFKKEAELDM) enclose the LisH domain. A coiled-coil region spans residues 56–82 (TSVIRLQKKVMELESKLNEAKEEFTSG). 7 WD repeats span residues 106 to 147 (GHRS…RTLK), 148 to 187 (GHTD…CIRT), 190 to 229 (GHDH…CVKT), 232 to 271 (GHRE…CKAE), 274 to 333 (EHEH…CLMT), 336 to 377 (GHDN…KTLN), and 379 to 410 (HEHF…WECR).

It belongs to the WD repeat LIS1/nudF family. As to quaternary structure, can self-associate. Component of the cytosolic PAF-AH (I) heterotetrameric enzyme, which is composed of PAFAH1B1 (beta), PAFAH1B2 (alpha2) and PAFAH1B3 (alpha1) subunits. The catalytic activity of the enzyme resides in the alpha1 (PAFAH1B3) and alpha2 (PAFAH1B2) subunits, whereas the beta subunit (PAFAH1B1) has regulatory activity. Trimer formation is not essential for the catalytic activity. Interacts with dynein, dynactin, nde1 and ndel1.

The protein localises to the cytoplasm. Its subcellular location is the cytoskeleton. It localises to the microtubule organizing center. It is found in the centrosome. Its function is as follows. Regulatory subunit (beta subunit) of the cytosolic type I platelet-activating factor (PAF) acetylhydrolase (PAF-AH (I)), an enzyme that catalyzes the hydrolyze of the acetyl group at the sn-2 position of PAF and its analogs and participates in the PAF inactivation. Positively regulates the activity of the minus-end directed microtubule motor protein dynein. May enhance dynein-mediated microtubule sliding by targeting dynein to the microtubule plus end. Required for several dynein- and microtubule-dependent processes such as the maintenance of Golgi integrity, the peripheral transport of microtubule fragments and the coupling of the nucleus and centrosome. May be required for proliferation of neuronal precursors and neuronal migration. In Xenopus tropicalis (Western clawed frog), this protein is Lissencephaly-1 homolog (pafah1b1).